The chain runs to 348 residues: Fe-S cluster assembly protein DRE2 (348 aa).

The N-terminal SAM-like domain stretch occupies residues 1–162; sequence MSQYKTGLLL…KKASSSTSNL (162 aa). The segment at 137–170 is disordered; it reads KTNNTKLQSGSKLPTFKKASSSTSNLPSFKKADH. Residues 144-163 are compositionally biased toward polar residues; sequence QSGSKLPTFKKASSSTSNLP. Residues 163–242 form a linker region; sequence PSFKKADHSR…EEELIDEDGS (80 aa). Ser-206 is subject to Phosphoserine. [2Fe-2S] cluster-binding residues include Cys-252, Cys-263, Cys-266, and Cys-268. The tract at residues 252–268 is fe-S binding site A; that stretch reads CGKSKTKKKKACKDCTC. The [4Fe-4S] cluster site is built by Cys-311, Cys-314, Cys-322, and Cys-325. Short sequence motifs (cx2C motif) lie at residues 311-314 and 322-325; these read CGSC and CSGC. Positions 311 to 325 are fe-S binding site B; sequence CGSCSLGDAFRCSGC.

The protein belongs to the anamorsin family. As to quaternary structure, monomer. Interacts with TAH18. Interacts with MIA40. Requires [2Fe-2S] cluster as cofactor. [4Fe-4S] cluster serves as cofactor.

The protein localises to the cytoplasm. It localises to the mitochondrion intermembrane space. Its function is as follows. Component of the cytosolic iron-sulfur (Fe-S) protein assembly (CIA) machinery required for the maturation of extramitochondrial Fe-S proteins. Part of an electron transfer chain functioning in an early step of cytosolic Fe-S biogenesis, facilitating the de novo assembly of a [4Fe-4S] cluster on the scaffold complex CFD1-NBP35. Electrons are transferred to DRE2 from NADPH via the FAD- and FMN-containing protein TAH18. TAH18-DRE2 are also required for the assembly of the diferric tyrosyl radical cofactor of ribonucleotide reductase (RNR), probably by providing electrons for reduction during radical cofactor maturation in the catalytic small subunit RNR2. The polypeptide is Fe-S cluster assembly protein DRE2 (Saccharomyces cerevisiae (strain Lalvin EC1118 / Prise de mousse) (Baker's yeast)).